Consider the following 355-residue polypeptide: UDP-N-acetylglucosamine--N-acetylmuramyl-(pentapeptide) pyrophosphoryl-undecaprenol N-acetylglucosamine transferase (355 aa).

UDP-N-acetyl-alpha-D-glucosamine contacts are provided by residues 12-14 (TGG), Asn124, Arg163, Ser191, Ile243, 262-267 (ALTVAE), and Gln288.

This sequence belongs to the glycosyltransferase 28 family. MurG subfamily.

The protein resides in the cell inner membrane. The enzyme catalyses di-trans,octa-cis-undecaprenyl diphospho-N-acetyl-alpha-D-muramoyl-L-alanyl-D-glutamyl-meso-2,6-diaminopimeloyl-D-alanyl-D-alanine + UDP-N-acetyl-alpha-D-glucosamine = di-trans,octa-cis-undecaprenyl diphospho-[N-acetyl-alpha-D-glucosaminyl-(1-&gt;4)]-N-acetyl-alpha-D-muramoyl-L-alanyl-D-glutamyl-meso-2,6-diaminopimeloyl-D-alanyl-D-alanine + UDP + H(+). Its pathway is cell wall biogenesis; peptidoglycan biosynthesis. Its function is as follows. Cell wall formation. Catalyzes the transfer of a GlcNAc subunit on undecaprenyl-pyrophosphoryl-MurNAc-pentapeptide (lipid intermediate I) to form undecaprenyl-pyrophosphoryl-MurNAc-(pentapeptide)GlcNAc (lipid intermediate II). This Tolumonas auensis (strain DSM 9187 / NBRC 110442 / TA 4) protein is UDP-N-acetylglucosamine--N-acetylmuramyl-(pentapeptide) pyrophosphoryl-undecaprenol N-acetylglucosamine transferase.